The following is a 539-amino-acid chain: Chaperonin GroEL 1 (539 aa).

Residues 30–33, Lys51, 87–91, Gly415, 480–482, and Asp496 each bind ATP; these read TLGP, DGTTT, and NAA.

Belongs to the chaperonin (HSP60) family. In terms of assembly, forms a cylinder of 14 subunits composed of two heptameric rings stacked back-to-back. Interacts with the co-chaperonin GroES.

Its subcellular location is the cytoplasm. It catalyses the reaction ATP + H2O + a folded polypeptide = ADP + phosphate + an unfolded polypeptide.. Functionally, together with its co-chaperonin GroES, plays an essential role in assisting protein folding. The GroEL-GroES system forms a nano-cage that allows encapsulation of the non-native substrate proteins and provides a physical environment optimized to promote and accelerate protein folding. The chain is Chaperonin GroEL 1 from Bradyrhizobium sp. (strain ORS 278).